A 656-amino-acid polypeptide reads, in one-letter code: PAN2-PAN3 deadenylation complex subunit pan3 (656 aa).

2 disordered regions span residues 1–24 (MAATRYNSGDLRRQVGSPRAKNRD) and 75–117 (SFTP…QQAN). A C3H1-type zinc finger spans residues 24–53 (DTKETLCRNVVIYGHCRWEDSGCTFNHDQN). Residues 63–83 (NSNRRVFNVESPSFTPANQQQ) carry the PABPC-interacting motif-2 (PAM-2) motif. 2 stretches are compositionally biased toward polar residues: residues 75–96 (SFTPANQQQSAGKKSTFSSQAA) and 107–117 (GTSTPTLQQAN). The pseudokinase domain stretch occupies residues 251-514 (QLLPNSGLPN…TVETLLGGIT (264 aa)). ATP is bound by residues 275–280 (TRNSTC), Arg-302, 352–359 (DFHPLSET), and 412–413 (SK). Positions 515–553 (THLANFANFVMQESDEKEFHLMRELENGRIARLMFKLSV) form a coiled coil. Positions 554 to 656 (VNERGDSCGV…SKPSATGATI (103 aa)) are knob domain.

This sequence belongs to the protein kinase superfamily. PAN3 family. As to quaternary structure, homodimer. Forms a heterotrimer with a catalytic subunit par-1/pan2 to form the poly(A)-nuclease (PAN) deadenylation complex. Interacts (via PAM-2 motif) with poly(A)-binding protein pabp-1 (via PABC domain), conferring substrate specificity of the enzyme complex.

It localises to the cytoplasm. Regulatory subunit of the poly(A)-nuclease (PAN) deadenylation complex, one of two cytoplasmic mRNA deadenylases involved in mRNA turnover. PAN specifically shortens poly(A) tails of RNA and the activity is stimulated by poly(A)-binding protein pabp-1. PAN deadenylation is followed by rapid degradation of the shortened mRNA tails by the CCR4-NOT complex. Deadenylated mRNAs are then degraded by two alternative mechanisms, namely exosome-mediated 3'-5' exonucleolytic degradation, or deadenylation-dependent mRNA decaping and subsequent 5'-3' exonucleolytic degradation by rgb-30/xrn1. May also be involved in post-transcriptional maturation of mRNA poly(A) tails. par-2/pan3 acts as a positive regulator for PAN activity, recruiting the catalytic subunit par-1/pan2 to mRNA via its interaction with RNA and with pabp-1. The polypeptide is PAN2-PAN3 deadenylation complex subunit pan3 (par-2) (Neurospora crassa (strain ATCC 24698 / 74-OR23-1A / CBS 708.71 / DSM 1257 / FGSC 987)).